Here is a 441-residue protein sequence, read N- to C-terminus: Serine hydroxymethyltransferase (441 aa).

Position 124–126 (124–126) interacts with (6S)-5,6,7,8-tetrahydrofolate; it reads GHI. At K239 the chain carries N6-(pyridoxal phosphate)lysine.

Belongs to the SHMT family. In terms of assembly, homodimer. Pyridoxal 5'-phosphate serves as cofactor.

It is found in the cytoplasm. It participates in amino-acid biosynthesis; glycine biosynthesis; glycine from L-serine: step 1/1. Functionally, catalyzes the reversible interconversion of serine and glycine with a modified folate serving as the one-carbon carrier. Also exhibits a pteridine-independent aldolase activity toward beta-hydroxyamino acids, producing glycine and aldehydes, via a retro-aldol mechanism. The protein is Serine hydroxymethyltransferase of Cenarchaeum symbiosum (strain A).